A 128-amino-acid polypeptide reads, in one-letter code: Gene 64 protein (128 aa).

The protein is Gene 64 protein (64) of Mycobacterium phage L5 (Mycobacteriophage L5).